The primary structure comprises 351 residues: UDP-3-O-acylglucosamine N-acyltransferase (351 aa).

The Proton acceptor role is filled by histidine 240.

This sequence belongs to the transferase hexapeptide repeat family. LpxD subfamily. As to quaternary structure, homotrimer.

The catalysed reaction is a UDP-3-O-[(3R)-3-hydroxyacyl]-alpha-D-glucosamine + a (3R)-hydroxyacyl-[ACP] = a UDP-2-N,3-O-bis[(3R)-3-hydroxyacyl]-alpha-D-glucosamine + holo-[ACP] + H(+). It functions in the pathway bacterial outer membrane biogenesis; LPS lipid A biosynthesis. Functionally, catalyzes the N-acylation of UDP-3-O-acylglucosamine using 3-hydroxyacyl-ACP as the acyl donor. Is involved in the biosynthesis of lipid A, a phosphorylated glycolipid that anchors the lipopolysaccharide to the outer membrane of the cell. The protein is UDP-3-O-acylglucosamine N-acyltransferase of Ectopseudomonas mendocina (strain ymp) (Pseudomonas mendocina).